A 341-amino-acid polypeptide reads, in one-letter code: Protein pelota homolog (341 aa).

The protein belongs to the eukaryotic release factor 1 family. Pelota subfamily. As to quaternary structure, monomer. Requires a divalent metal cation as cofactor.

It localises to the cytoplasm. In terms of biological role, may function in recognizing stalled ribosomes, interact with stem-loop structures in stalled mRNA molecules, and effect endonucleolytic cleavage of the mRNA. May play a role in the release non-functional ribosomes and degradation of damaged mRNAs. Has endoribonuclease activity. The chain is Protein pelota homolog from Methanospirillum hungatei JF-1 (strain ATCC 27890 / DSM 864 / NBRC 100397 / JF-1).